The sequence spans 155 residues: Endoribonuclease YbeY (155 aa).

Residues His-114, His-118, and His-124 each coordinate Zn(2+).

This sequence belongs to the endoribonuclease YbeY family. Zn(2+) is required as a cofactor.

It localises to the cytoplasm. In terms of biological role, single strand-specific metallo-endoribonuclease involved in late-stage 70S ribosome quality control and in maturation of the 3' terminus of the 16S rRNA. The polypeptide is Endoribonuclease YbeY (Escherichia coli O6:K15:H31 (strain 536 / UPEC)).